Here is a 1363-residue protein sequence, read N- to C-terminus: MGEFRKNFGRIEEILEVPNLIDIQTRSYETFLQEDVAPENRKNFGLQGAFKSVFPISDFSGKCSLEFVSYKIGAVRYDVNECIQKGMTYAAPLKIVVRLVVFDTDRLSDQKNIRDIKEQEIYFGEIPLMTEKGTFIVNGTERVIVSQLHRSPGIFFDHDKGKTLTSGKLIYSARIIPIRGSWLDLEFDSKDLLYVRIDRRRKMPVTILLKAMGYSTEDLLNYFYDVEHIFCEGENFYAAVDESLVGHKLYDDIRDINTGEILFKKGRRINKVILKRIREQRVERIKMDVEELPGRILATDILDPETGEVLFHCNEALSAAGIDVVREKGIRELSVINLGEDLSNVSIRDTLLIDRMETPGDAIIEIYRRLRPSNPPTPDTAQKFFNSLFFENESYDLSTVGRAKMNYKLRLDVSTDVTVLRKEDIMAAVKYLIDLKNGVPECSVDDIDHLGNRRVRSVGELIENQYRIGLVRMERAIKEKMSLQDIETMMPHDLVNVKPVSAVVSEFFGSSQLSQFMDQTNPLSEITHKRRLSALGPGGLTRERAGFEVRDVHPTHYGRICPVETPEGPNIGLIVSLSTYARVNEFGFIETPYRIVKEGRVLPEVKFLTAIEEENQVIAPADQPVNHDGSFKGDLISARKGGDFVNVVPSEVNMVDVSPNQLVSVAATLIPFLEHDDANRALMGSNMQRQAVPLMRPEIPLVGTGMERIVARDSGAVVVAKRSGIVESVDASRIVIKCESAEKTDRDTGVDIYTLIKYQRSNQDTCFNQKAIVNKGQRVRKGDIIADGPATDNGELALGHNVMVAFMSWGGYNYEDSILVSERIVKEDIYTSIHIEEFETMARDTKLGKEDITRDIPNVGEEALRNLDDSGIVRMGVSVKSGDILVGKITPKGETQLSSEEKLLRAIFGEKASDVRDTSLRVPPGVEGTVIDAKVFTRKGAEKDHRSQYIEDEAIAMLQKDREDEIRIITEAVKKEVGTLLQGKQSGAKIVDPKRKKIYLKKGDIITPEILSEIPLHLWKEITVADDEETERAVGQMMANLYDKIEVVEAYFNEKTEKLKASDELPPGVIKMVKVYIAIKRKLQAGDKMAGRHGNKGVLSRILPEEDMPYFKDGRPVDIVLNPLGVPSRMNVGQILETHLGWAAKGLGEKLNDMLDSYQKGNQLRDELKGIYQSREFEKFVDGATEEETYQFVRKLRRGIAVSSPVFDGATESDIRNMLKLANLPSTGQAILYDGRTGEPFDQEITVGMIYMLKLHHLVDNKIHARSIGPYSLVTQQPLGGKAQFGGQRLGEMEVWAMEAYGAAYSLQEFLTVKSDDVAGRTRIYEAIVKGENTSEPGLPESFNVLVKELQSLCLDVELIEEE.

The protein belongs to the RNA polymerase beta chain family. In terms of assembly, the RNAP catalytic core consists of 2 alpha, 1 beta, 1 beta' and 1 omega subunit. When a sigma factor is associated with the core the holoenzyme is formed, which can initiate transcription.

The catalysed reaction is RNA(n) + a ribonucleoside 5'-triphosphate = RNA(n+1) + diphosphate. Functionally, DNA-dependent RNA polymerase catalyzes the transcription of DNA into RNA using the four ribonucleoside triphosphates as substrates. The protein is DNA-directed RNA polymerase subunit beta of Syntrophus aciditrophicus (strain SB).